The following is a 241-amino-acid chain: DNA repair protein RecO (241 aa).

This sequence belongs to the RecO family.

Functionally, involved in DNA repair and RecF pathway recombination. This chain is DNA repair protein RecO, found in Ruegeria sp. (strain TM1040) (Silicibacter sp.).